Reading from the N-terminus, the 86-residue chain is Small ribosomal subunit protein uS17 (86 aa).

Belongs to the universal ribosomal protein uS17 family. Part of the 30S ribosomal subunit.

Its function is as follows. One of the primary rRNA binding proteins, it binds specifically to the 5'-end of 16S ribosomal RNA. This chain is Small ribosomal subunit protein uS17, found in Helicobacter acinonychis (strain Sheeba).